Reading from the N-terminus, the 314-residue chain is Taste receptor type 2 member 42 (314 aa).

The Extracellular segment spans residues 1–7 (MPTELDK). Residues 8-28 (IFLILAIVEFIIGLLGNVFIG) traverse the membrane as a helical segment. Topologically, residues 29–50 (LVNCSEGIKNQKVFSADFILTC) are cytoplasmic. The chain crosses the membrane as a helical span at residues 51-71 (LAISTIGQLLVILFDSFLVGL). Residues 72 to 101 (ASHLYTTYRLGKLVILLWHMTNHLTTWLAT) are Extracellular-facing. A helical transmembrane segment spans residues 102–122 (CLSIFYFFKIAHFPHSLFLWL). Topologically, residues 123 to 127 (RWRMN) are cytoplasmic. Residues 128 to 148 (GMIVMLRTLSLFLLIFDSLVL) form a helical membrane-spanning segment. The Extracellular segment spans residues 149-187 (KLFIDISLNIIDKSNLTLYFDESKTLYDKLSILKTLLSL). Asparagine 163 carries an N-linked (GlcNAc...) asparagine glycan. Residues 188–208 (TSFIPFSLSLTSLLFLFLSLV) form a helical membrane-spanning segment. At 209–238 (RHTRNLKLSSLGSRDSSTEAHRRAMKMVMS) the chain is on the cytoplasmic side. The helical transmembrane segment at 239–259 (FLFLFIVHFFSLQVANWIFFM) threads the bilayer. The Extracellular segment spans residues 260 to 265 (SWNNKY). Residues 266 to 286 (IKFVMLALNAFPSCHSFILIL) traverse the membrane as a helical segment. At 287-314 (GNSKLRQTAVRLLSHLRNYTKTSNPLPL) the chain is on the cytoplasmic side.

This sequence belongs to the G-protein coupled receptor T2R family.

It localises to the membrane. Functionally, receptor that may play a role in the perception of bitterness and is gustducin-linked. May play a role in sensing the chemical composition of the gastrointestinal content. The activity of this receptor may stimulate alpha gustducin, mediate PLC-beta-2 activation and lead to the gating of TRPM5. The chain is Taste receptor type 2 member 42 (TAS2R42) from Pongo pygmaeus (Bornean orangutan).